A 284-amino-acid polypeptide reads, in one-letter code: RNase adapter protein RapZ (284 aa).

8–15 (GRSGSGKS) contributes to the ATP binding site. 56-59 (DVRN) serves as a coordination point for GTP. The interval 266-284 (RSRGKNVQSRHRTLEKRKS) is RNA-binding.

The protein belongs to the RapZ-like family. RapZ subfamily. Homotrimer.

Its function is as follows. Modulates the synthesis of GlmS, by affecting the processing and stability of the regulatory small RNA GlmZ. When glucosamine-6-phosphate (GlcN6P) concentrations are high in the cell, RapZ binds GlmZ and targets it to cleavage by RNase E. Consequently, GlmZ is inactivated and unable to activate GlmS synthesis. Under low GlcN6P concentrations, RapZ is sequestered and inactivated by an other regulatory small RNA, GlmY, preventing GlmZ degradation and leading to synthesis of GlmS. The polypeptide is RNase adapter protein RapZ (Cronobacter sakazakii (strain ATCC BAA-894) (Enterobacter sakazakii)).